The sequence spans 199 residues: Putative inactive ribonuclease 11 (199 aa).

Residues 1 to 16 (METFPLLLLSLGLVLA) form the signal peptide. N-linked (GlcNAc...) asparagine glycosylation occurs at Asn61. Residue His82 is the Proton acceptor of the active site. 2 N-linked (GlcNAc...) asparagine glycosylation sites follow: Asn89 and Asn111. Cystine bridges form between Cys98–Cys158 and Cys114–Cys169. 115–119 (KWSNN) serves as a coordination point for substrate.

The protein belongs to the pancreatic ribonuclease family.

It localises to the secreted. The sequence is that of Putative inactive ribonuclease 11 (RNASE11) from Homo sapiens (Human).